The chain runs to 376 residues: General transcription factor IIH subunit 2 (376 aa).

Positions 64–206 constitute a VWFA domain; it reads HVMIVIDCSR…NIRCSAIGLS (143 aa). The C4-type zinc finger occupies 286-303; that stretch reads CTQCGARHCSIPAECPVC.

Belongs to the GTF2H2 family. As to quaternary structure, component of the 7-subunit TFIIH core complex composed of xpb-1, xpd-1, gtf-2H1, gtf-2H2C, gtf-2H3, Y73F8A.24 and gtf-2H5, which is active in NER. The core complex associates with the 3-subunit CDK-activating kinase (CAK) module composed of cyh-1, cdk-7 and mnat-1 to form the 10-subunit holoenzyme (holo-TFIIH) active in transcription.

It is found in the nucleus. Component of the general transcription and DNA repair factor IIH (TFIIH) core complex, which is involved in general and transcription-coupled nucleotide excision repair (NER) of damaged DNA and, when complexed to CAK, in RNA transcription by RNA polymerase II. In NER, TFIIH acts by opening DNA around the lesion to allow the excision of the damaged oligonucleotide and its replacement by a new DNA fragment. In transcription, TFIIH has an essential role in transcription initiation. When the pre-initiation complex (PIC) has been established, TFIIH is required for promoter opening and promoter escape. Phosphorylation of the C-terminal tail (CTD) of the largest subunit of RNA polymerase II by the kinase module CAK controls the initiation of transcription. This is General transcription factor IIH subunit 2 from Caenorhabditis elegans.